A 414-amino-acid chain; its full sequence is 3-phosphoshikimate 1-carboxyvinyltransferase (414 aa).

3-phosphoshikimate-binding residues include Lys-20, Ser-21, and Arg-25. Residue Lys-20 participates in phosphoenolpyruvate binding. Arg-113 serves as a coordination point for phosphoenolpyruvate. Residues Ser-154, Ser-155, Gln-156, Ser-181, Asp-296, and Lys-323 each contribute to the 3-phosphoshikimate site. Phosphoenolpyruvate is bound at residue Gln-156. Catalysis depends on Asp-296, which acts as the Proton acceptor. Phosphoenolpyruvate contacts are provided by Arg-327, Arg-371, and Lys-395.

This sequence belongs to the EPSP synthase family. In terms of assembly, monomer.

It localises to the cytoplasm. The enzyme catalyses 3-phosphoshikimate + phosphoenolpyruvate = 5-O-(1-carboxyvinyl)-3-phosphoshikimate + phosphate. It functions in the pathway metabolic intermediate biosynthesis; chorismate biosynthesis. Its function is as follows. Catalyzes the transfer of the enolpyruvyl moiety of phosphoenolpyruvate (PEP) to the 5-hydroxyl of shikimate-3-phosphate (S3P) to produce enolpyruvyl shikimate-3-phosphate and inorganic phosphate. In Saccharolobus solfataricus (strain ATCC 35092 / DSM 1617 / JCM 11322 / P2) (Sulfolobus solfataricus), this protein is 3-phosphoshikimate 1-carboxyvinyltransferase.